Here is a 216-residue protein sequence, read N- to C-terminus: Transmembrane emp24 domain-containing protein p24delta5 (216 aa).

The N-terminal stretch at 1 to 27 (MAINRIAHGSLFLTVVLFFLTVNYGEA) is a signal peptide. The Lumenal segment spans residues 28–183 (IWLTIPTTGG…REVSETTNSR (156 aa)). One can recognise a GOLD domain in the interval 38 to 151 (TKCVSEEIQS…IEGVELQLRR (114 aa)). Residue N86 is glycosylated (N-linked (GlcNAc...) asparagine). Positions 137–159 (AKKEKIEGVELQLRRLEGLVLSI) form a coiled coil. R169 and R174 each carry omega-N-methylated arginine. A helical membrane pass occupies residues 184-204 (VAWFSIMSLGVCVVVVGSQIL). Residues 205 to 216 (YLKRYFHKKKLI) are Cytoplasmic-facing. The COPII vesicle coat-binding signature appears at 209–210 (YF). Residues 209–216 (YFHKKKLI) carry the COPI vesicle coat-binding motif.

The protein belongs to the EMP24/GP25L family. Probably oligomerizes with other members of the EMP24/GP25L family. Associates with the COPI vesicle coat (coatomer). Associates with the COPII vesicle coat (coatomer). Interacts with p24beta2.

It localises to the endoplasmic reticulum membrane. Functionally, involved in vesicular protein trafficking. Mainly functions in the early secretory pathway. Thought to act as cargo receptor at the lumenal side for incorporation of secretory cargo molecules into transport vesicles and to be involved in vesicle coat formation at the cytoplasmic side. Interacts with p24beta2 at endoplasmic reticulum export sites for endoplasmic reticulum exit and coupled transport to the Golgi apparatus. Once in the Golgi, interacts very efficiently with the COPI machinery for retrograde transport back to the endoplasmic reticulum. This chain is Transmembrane emp24 domain-containing protein p24delta5, found in Arabidopsis thaliana (Mouse-ear cress).